We begin with the raw amino-acid sequence, 264 residues long: Shikimate dehydrogenase (NADP(+)) (264 aa).

Shikimate contacts are provided by residues 14–16 and Thr-59; that span reads SLS. Lys-63 functions as the Proton acceptor in the catalytic mechanism. Glu-75 contacts NADP(+). Shikimate-binding residues include Asn-84 and Asp-99. NADP(+) is bound by residues 122 to 126, 144 to 149, and Ile-205; these read GAGGA and NRTPSK. Tyr-207 serves as a coordination point for shikimate. Gly-228 provides a ligand contact to NADP(+).

Belongs to the shikimate dehydrogenase family. Homodimer.

It carries out the reaction shikimate + NADP(+) = 3-dehydroshikimate + NADPH + H(+). It functions in the pathway metabolic intermediate biosynthesis; chorismate biosynthesis; chorismate from D-erythrose 4-phosphate and phosphoenolpyruvate: step 4/7. Functionally, involved in the biosynthesis of the chorismate, which leads to the biosynthesis of aromatic amino acids. Catalyzes the reversible NADPH linked reduction of 3-dehydroshikimate (DHSA) to yield shikimate (SA). The polypeptide is Shikimate dehydrogenase (NADP(+)) (Pyrococcus abyssi (strain GE5 / Orsay)).